The sequence spans 365 residues: BTB/POZ and TAZ domain-containing protein 1 (365 aa).

One can recognise a BTB domain in the interval 25–96 (TDVEIITSGR…LYSPSVTENE (72 aa)). Positions 193-202 (RKKRRRRHRR) match the Nuclear localization signal motif. Residues 205–304 (NLYLQLSEAM…SESCRVPLCR (100 aa)) form a TAZ-type zinc finger. The segment at 315–338 (KMVEDTKWKVLVRRVASAKAMSSL) is caM-binding.

As to quaternary structure, interacts with CUL3A. Interacts with GTE9/BET9 and GTE11/BET10 through the BTB domain. In terms of tissue distribution, preferentially expressed in young leaves, roots and stems.

The protein localises to the nucleus. The protein resides in the cytoplasm. It participates in protein modification; protein ubiquitination. In terms of biological role, may act as a substrate-specific adapter of an E3 ubiquitin-protein ligase complex (CUL3-RBX1-BTB) which mediates the ubiquitination and subsequent proteasomal degradation of target proteins. Also targeted for degradation by the 26S proteasome pathway. May be involved in gametophyte development. In Arabidopsis thaliana (Mouse-ear cress), this protein is BTB/POZ and TAZ domain-containing protein 1 (BT1).